The sequence spans 373 residues: MPGWSCLVTGAGGFLGQRIVQLLMQEKDLEEIRVLDKFFRPETREQFFNLDTNIKVTVLEGDILDTQYLRKACQGISVVIHTAAVIDVTGVIPRQTILDVNLKGTQNLLEACIQASVPAFIFSSSVDVAGPNSYKEIILNGNEEEHHESIWSDPYPYSKKMAEKAVLAANGSMLKIGGTLHTCALRPMYIYGERSPFISNTIITALKNKNILGCTGKFSTANPVYVGNVAWAHILAARGLRDPKKSPNIQGEFYYISDDTPHQSYDDLNYTLSKEWGFCPDSSWSLPVPLLYWLAFMLETVSFLLSPIYRFIPPFNRHLVTLTGSTFTFSYKKAQRDLGYEPLVSWEEAKQKTSEWIGTLVEQHRETLDTKSQ.

Catalysis depends on Tyr-155, which acts as the Proton acceptor. Lys-159 is a binding site for NAD(+). A helical transmembrane segment spans residues 288-308 (VPLLYWLAFMLETVSFLLSPI).

The protein belongs to the 3-beta-HSD family. As to expression, expressed in skin and testis.

The protein localises to the endoplasmic reticulum membrane. The protein resides in the mitochondrion membrane. It carries out the reaction a 3beta-hydroxy-Delta(5)-steroid + NAD(+) = a 3-oxo-Delta(5)-steroid + NADH + H(+). It catalyses the reaction a 3-oxo-Delta(5)-steroid = a 3-oxo-Delta(4)-steroid. It participates in lipid metabolism; steroid biosynthesis. 3-beta-HSD is a bifunctional enzyme, that catalyzes the oxidative conversion of Delta(5)-ene-3-beta-hydroxy steroid, and the oxidative conversion of ketosteroids. The 3-beta-HSD enzymatic system plays a crucial role in the biosynthesis of all classes of hormonal steroids. May be involved in local production of progesterone. The sequence is that of 3 beta-hydroxysteroid dehydrogenase/Delta 5--&gt;4-isomerase type 6 (Hsd3b6) from Mus musculus (Mouse).